The sequence spans 237 residues: Phosphoribosylaminoimidazole-succinocarboxamide synthase (237 aa).

Belongs to the SAICAR synthetase family.

The enzyme catalyses 5-amino-1-(5-phospho-D-ribosyl)imidazole-4-carboxylate + L-aspartate + ATP = (2S)-2-[5-amino-1-(5-phospho-beta-D-ribosyl)imidazole-4-carboxamido]succinate + ADP + phosphate + 2 H(+). It functions in the pathway purine metabolism; IMP biosynthesis via de novo pathway; 5-amino-1-(5-phospho-D-ribosyl)imidazole-4-carboxamide from 5-amino-1-(5-phospho-D-ribosyl)imidazole-4-carboxylate: step 1/2. The polypeptide is Phosphoribosylaminoimidazole-succinocarboxamide synthase (Alteromonas mediterranea (strain DSM 17117 / CIP 110805 / LMG 28347 / Deep ecotype)).